The primary structure comprises 159 residues: Large ribosomal subunit protein uL11 (159 aa).

Residues 137 to 149 (EGKDPREVQREVD) show a composition bias toward basic and acidic residues. Residues 137 to 159 (EGKDPREVQREVDSGAWDKLLGG) are disordered.

Belongs to the universal ribosomal protein uL11 family. As to quaternary structure, part of the ribosomal stalk of the 50S ribosomal subunit. Interacts with L10 and the large rRNA to form the base of the stalk. L10 forms an elongated spine to which L12 dimers bind in a sequential fashion forming a multimeric L10(L12)X complex.

Its function is as follows. Forms part of the ribosomal stalk which helps the ribosome interact with GTP-bound translation factors. The sequence is that of Large ribosomal subunit protein uL11 from Korarchaeum cryptofilum (strain OPF8).